Reading from the N-terminus, the 340-residue chain is Phosphoribosylformylglycinamidine cyclo-ligase (340 aa).

The protein belongs to the AIR synthase family.

Its subcellular location is the cytoplasm. The catalysed reaction is 2-formamido-N(1)-(5-O-phospho-beta-D-ribosyl)acetamidine + ATP = 5-amino-1-(5-phospho-beta-D-ribosyl)imidazole + ADP + phosphate + H(+). It functions in the pathway purine metabolism; IMP biosynthesis via de novo pathway; 5-amino-1-(5-phospho-D-ribosyl)imidazole from N(2)-formyl-N(1)-(5-phospho-D-ribosyl)glycinamide: step 2/2. The protein is Phosphoribosylformylglycinamidine cyclo-ligase of Streptococcus pneumoniae (strain 70585).